A 142-amino-acid chain; its full sequence is Large ribosomal subunit protein uL11 (142 aa).

It belongs to the universal ribosomal protein uL11 family. In terms of assembly, part of the ribosomal stalk of the 50S ribosomal subunit. Interacts with L10 and the large rRNA to form the base of the stalk. L10 forms an elongated spine to which L12 dimers bind in a sequential fashion forming a multimeric L10(L12)X complex. In terms of processing, one or more lysine residues are methylated.

Its function is as follows. Forms part of the ribosomal stalk which helps the ribosome interact with GTP-bound translation factors. This chain is Large ribosomal subunit protein uL11, found in Acinetobacter baylyi (strain ATCC 33305 / BD413 / ADP1).